We begin with the raw amino-acid sequence, 79 residues long: Spidroin-1 (79 aa).

It belongs to the silk fibroin family. In terms of assembly, major subunit, with spidroin 2, of the dragline silk.

It is found in the secreted. Its subcellular location is the extracellular space. Functionally, spiders' major ampullate silk possesses unique characteristics of strength and elasticity. Fibroin consists of pseudocrystalline regions of antiparallel beta-sheet interspersed with elastic amorphous segments. This chain is Spidroin-1, found in Araneus bicentenarius (Giant lichen orbweaver).